The sequence spans 161 residues: ALGPFYPSRXXXXXXXXXXXXXXXXXXXXXXXXXXXXQSLFRTVLDSGISEVRSDRDQFLILLDVKHFSPEDLTVKVLDDFVEIHGKHNERQDDHGYISREFHRRYRLPSNVDQSALSCSLSADGMLTFCGXXVQSGMDASHSERAIPVSREEKPSSAPSS.

The required for complex formation with BFSP1 and BFSP2 stretch occupies residues 1-51; it reads ALGPFYPSRXXXXXXXXXXXXXXXXXXXXXXXXXXXXQSLFRTVLDSGISE. Position 38 is a deamidated glutamine; partial (glutamine 38). Residues 40–150 enclose the sHSP domain; that stretch reads LFRTVLDSGI…SHSERAIPVS (111 aa). An N6-acetyllysine modification is found at lysine 87. Residue histidine 88 coordinates Zn(2+). Asparagine 89 is modified (deamidated asparagine; partial). Residues glutamate 90 and histidine 95 each contribute to the Zn(2+) site. At serine 110 the chain carries Phosphoserine. At asparagine 111 the chain carries Deamidated asparagine; partial. A disulfide bridge connects residues cysteine 119 and cysteine 130. Residue glutamine 135 is modified to Deamidated glutamine; partial. The segment at 140–161 is disordered; sequence ASHSERAIPVSREEKPSSAPSS. A compositionally biased stretch (basic and acidic residues) spans 141 to 155; it reads SHSERAIPVSREEKP. Position 142 (histidine 142) interacts with Zn(2+). An O-linked (GlcNAc) serine glycan is attached at serine 150.

The protein belongs to the small heat shock protein (HSP20) family. As to quaternary structure, heteromer composed of three CRYAA and one CRYAB subunits. Inter-subunit bridging via zinc ions enhances stability, which is crucial as there is no protein turn over in the lens. Can also form homodimers and homotetramers (dimers of dimers) which serve as the building blocks of homooligomers. Within homooligomers, the zinc-binding motif is created from residues of 3 different molecules. His-88 and Glu-90 from one molecule are ligands of the zinc ion, and His-95 and His-142 residues from additional molecules complete the site with tetrahedral coordination geometry. Part of a complex required for lens intermediate filament formation composed of BFSP1, BFSP2 and CRYAA. Post-translationally, undergoes age-dependent proteolytical cleavage at the C-terminus.

Its subcellular location is the cytoplasm. The protein resides in the nucleus. Its function is as follows. Contributes to the transparency and refractive index of the lens. In its oxidized form (absence of intramolecular disulfide bond), acts as a chaperone, preventing aggregation of various proteins under a wide range of stress conditions. Required for the correct formation of lens intermediate filaments as part of a complex composed of BFSP1, BFSP2 and CRYAA. The polypeptide is Alpha-crystallin A chain (CRYAA) (Galegeeska rufescens (East African rufous sengi)).